Here is a 59-residue protein sequence, read N- to C-terminus: Large ribosomal subunit protein bL32 (59 aa).

Positions 1 to 25 (MAVQQNKKSPSKRGMHRAHDFLTAP) are disordered.

Belongs to the bacterial ribosomal protein bL32 family.

In Azoarcus sp. (strain BH72), this protein is Large ribosomal subunit protein bL32.